A 506-amino-acid chain; its full sequence is Maturase K (506 aa).

It belongs to the intron maturase 2 family. MatK subfamily.

The protein resides in the plastid. Its subcellular location is the chloroplast. In terms of biological role, usually encoded in the trnK tRNA gene intron. Probably assists in splicing its own and other chloroplast group II introns. The polypeptide is Maturase K (Trifolium subterraneum (Subterranean clover)).